The chain runs to 282 residues: 2-dehydro-3-deoxyphosphooctonate aldolase (282 aa).

The protein belongs to the KdsA family.

The protein localises to the cytoplasm. It catalyses the reaction D-arabinose 5-phosphate + phosphoenolpyruvate + H2O = 3-deoxy-alpha-D-manno-2-octulosonate-8-phosphate + phosphate. The protein operates within carbohydrate biosynthesis; 3-deoxy-D-manno-octulosonate biosynthesis; 3-deoxy-D-manno-octulosonate from D-ribulose 5-phosphate: step 2/3. It participates in bacterial outer membrane biogenesis; lipopolysaccharide biosynthesis. This chain is 2-dehydro-3-deoxyphosphooctonate aldolase, found in Shewanella sediminis (strain HAW-EB3).